A 267-amino-acid chain; its full sequence is Type III pantothenate kinase (267 aa).

6-13 (DVRNTHTT) is a binding site for ATP. 109–112 (GADR) is a binding site for substrate. D111 acts as the Proton acceptor in catalysis. Residue D131 participates in K(+) binding. Residue S134 participates in ATP binding. T186 serves as a coordination point for substrate.

It belongs to the type III pantothenate kinase family. In terms of assembly, homodimer. The cofactor is NH4(+). K(+) serves as cofactor.

The protein localises to the cytoplasm. The enzyme catalyses (R)-pantothenate + ATP = (R)-4'-phosphopantothenate + ADP + H(+). It functions in the pathway cofactor biosynthesis; coenzyme A biosynthesis; CoA from (R)-pantothenate: step 1/5. Catalyzes the phosphorylation of pantothenate (Pan), the first step in CoA biosynthesis. The protein is Type III pantothenate kinase of Mycobacterium sp. (strain JLS).